The chain runs to 233 residues: Zinc import ATP-binding protein ZnuC (233 aa).

The ABC transporter domain occupies isoleucine 6–leucine 222. Glycine 38–threonine 45 provides a ligand contact to ATP.

It belongs to the ABC transporter superfamily. Zinc importer (TC 3.A.1.15.5) family. The complex is composed of two ATP-binding proteins (ZnuC), two transmembrane proteins (ZnuB) and a solute-binding protein (ZnuA).

The protein resides in the cell inner membrane. It carries out the reaction Zn(2+)(out) + ATP(in) + H2O(in) = Zn(2+)(in) + ADP(in) + phosphate(in) + H(+)(in). Functionally, part of the ABC transporter complex ZnuABC involved in zinc import. Responsible for energy coupling to the transport system. This Rickettsia prowazekii (strain Madrid E) protein is Zinc import ATP-binding protein ZnuC.